The primary structure comprises 22 residues: Antimicrobial peptide 4 (22 aa).

In terms of tissue distribution, expressed by the skin glands.

It is found in the secreted. In terms of biological role, has very strong antimicrobial activity against Gram-positive bacterium S.aureus and yeast C.albicans, and very weak activity against Gram-negative bacterium E.coli. Has strong hemolytic activity against human red blood cells. The chain is Antimicrobial peptide 4 from Xenopus tropicalis (Western clawed frog).